The chain runs to 176 residues: COA8 family protein CG14806, mitochondrial (176 aa).

Residues 1 to 23 (MNKCFRCQPRISLFQFSLPRCYA) constitute a mitochondrion transit peptide.

This sequence belongs to the COA8 family.

It is found in the mitochondrion inner membrane. In terms of biological role, may be required for cytochrome c complex (COX) assembly and function, COX being the terminal component of the mitochondrial respiratory chain. Functionally, (Microbial infection) Required for optimal replication of E.chaffeensis. The protein is COA8 family protein CG14806, mitochondrial of Drosophila melanogaster (Fruit fly).